Here is a 350-residue protein sequence, read N- to C-terminus: Small ribosomal subunit biogenesis GTPase RsgA (350 aa).

Positions 1-17 are enriched in polar residues; sequence MSKNKLSKGQQRRVQAN. The disordered stretch occupies residues 1–35; the sequence is MSKNKLSKGQQRRVQANHQRRLRTDRKPELDDSQL. The CP-type G domain occupies 103–273; that stretch reads TSVLTRPDLY…VIDSPGVREF (171 aa). Residues 159–162 and 213–221 each bind GTP; these read NKID and GQSGVGKSS. Zn(2+) is bound by residues C297, C302, H304, and C310.

This sequence belongs to the TRAFAC class YlqF/YawG GTPase family. RsgA subfamily. In terms of assembly, monomer. Associates with 30S ribosomal subunit, binds 16S rRNA. The cofactor is Zn(2+).

The protein resides in the cytoplasm. One of several proteins that assist in the late maturation steps of the functional core of the 30S ribosomal subunit. Helps release RbfA from mature subunits. May play a role in the assembly of ribosomal proteins into the subunit. Circularly permuted GTPase that catalyzes slow GTP hydrolysis, GTPase activity is stimulated by the 30S ribosomal subunit. The sequence is that of Small ribosomal subunit biogenesis GTPase RsgA from Yersinia pseudotuberculosis serotype O:1b (strain IP 31758).